Here is a 116-residue protein sequence, read N- to C-terminus: Phosphoribosyl-ATP pyrophosphatase (116 aa).

The protein belongs to the PRA-PH family.

It localises to the cytoplasm. The catalysed reaction is 1-(5-phospho-beta-D-ribosyl)-ATP + H2O = 1-(5-phospho-beta-D-ribosyl)-5'-AMP + diphosphate + H(+). It participates in amino-acid biosynthesis; L-histidine biosynthesis; L-histidine from 5-phospho-alpha-D-ribose 1-diphosphate: step 2/9. The polypeptide is Phosphoribosyl-ATP pyrophosphatase (Nitrobacter winogradskyi (strain ATCC 25391 / DSM 10237 / CIP 104748 / NCIMB 11846 / Nb-255)).